The following is a 505-amino-acid chain: MKSKSIMVQGTASSVGKSILCTGLCRVFYKDGYNVNPFKSQNMSLNSAITCDGGEIGRAQYMQAEASNKVPSVKMNPILLKPNSDRGSQVIINGKVFKNMDAVDYYKFKPQLKKDVSKIYNKLSDESDIIVIEGAGSPAEINLNKEDFVNMGMAKIAKSPVILVGDIDKGGVFASIVGTMMLLKEDERKMVRGVIINKFRGSYEILKPGLKMLEDIIKVPVLGVIPYFNLNLEDEDSATDWSKFNFNSKGDIDVAVIKLPHMSNFTDINPLKMYDDVSIRLIEKVEDLKNPNLIIIPGSKNTIKDMEYLKSSGMNSAILNCHSNGSFVFGICGGFQILGSKIKDPNNIESNITSIEGLNLINSVTEIKTDKTTTLTEARDKIFNCNIKGYEIHMGKTLIDDNNSNFLVINSRNEETCNDIDGAISKDKRVFGTYIHGIFDNSEFTRKFLNLIRKNAGMDEIKETPKDYWEFKNEEYDKLADIIRNNVDMKKLYEIVNEGIDETDN.

One can recognise a GATase cobBQ-type domain in the interval D251–F444. C332 acts as the Nucleophile in catalysis. H436 is an active-site residue.

It belongs to the CobB/CobQ family. CobQ subfamily.

It functions in the pathway cofactor biosynthesis; adenosylcobalamin biosynthesis. In terms of biological role, catalyzes amidations at positions B, D, E, and G on adenosylcobyrinic A,C-diamide. NH(2) groups are provided by glutamine, and one molecule of ATP is hydrogenolyzed for each amidation. The sequence is that of Cobyric acid synthase from Clostridium novyi (strain NT).